Consider the following 276-residue polypeptide: Chymotrypsin (276 aa).

A signal peptide spans 1 to 16; that stretch reads MKVALVVLALFGVSLA. Residues 17–45 constitute a propeptide, activation peptide; that stretch reads ASIDNIEIPPSKNIYVEPINQPEVDPSLE. The Peptidase S1 domain occupies 46–272; sequence IVNGQEVVPH…YLNWLQTHSE (227 aa). Cysteine 74 and cysteine 90 are disulfide-bonded. Residues histidine 89 and aspartate 135 each act as charge relay system in the active site. Asparagine 144 and asparagine 193 each carry an N-linked (GlcNAc...) asparagine glycan. Intrachain disulfides connect cysteine 202-cysteine 215 and cysteine 225-cysteine 250. Serine 229 serves as the catalytic Charge relay system.

The protein belongs to the peptidase S1 family. As to expression, expressed in larval carcasses and gut, and adult gut.

Its subcellular location is the secreted. It localises to the extracellular space. It carries out the reaction Preferential cleavage: Tyr-|-Xaa, Trp-|-Xaa, Phe-|-Xaa, Leu-|-Xaa.. Serine protease with chymotryptic and collagenolytic activities. This chain is Chymotrypsin, found in Phaedon cochleariae (Mustard beetle).